We begin with the raw amino-acid sequence, 205 residues long: Thiamine-phosphate synthase (205 aa).

4-amino-2-methyl-5-(diphosphooxymethyl)pyrimidine is bound by residues 35 to 39 (QYRDK) and asparagine 67. Mg(2+)-binding residues include aspartate 68 and aspartate 86. Residue threonine 105 coordinates 4-amino-2-methyl-5-(diphosphooxymethyl)pyrimidine. 132 to 134 (SQT) lines the 2-[(2R,5Z)-2-carboxy-4-methylthiazol-5(2H)-ylidene]ethyl phosphate pocket. A 4-amino-2-methyl-5-(diphosphooxymethyl)pyrimidine-binding site is contributed by lysine 135. Residue glycine 162 participates in 2-[(2R,5Z)-2-carboxy-4-methylthiazol-5(2H)-ylidene]ethyl phosphate binding.

It belongs to the thiamine-phosphate synthase family. Mg(2+) is required as a cofactor.

The catalysed reaction is 2-[(2R,5Z)-2-carboxy-4-methylthiazol-5(2H)-ylidene]ethyl phosphate + 4-amino-2-methyl-5-(diphosphooxymethyl)pyrimidine + 2 H(+) = thiamine phosphate + CO2 + diphosphate. It carries out the reaction 2-(2-carboxy-4-methylthiazol-5-yl)ethyl phosphate + 4-amino-2-methyl-5-(diphosphooxymethyl)pyrimidine + 2 H(+) = thiamine phosphate + CO2 + diphosphate. The enzyme catalyses 4-methyl-5-(2-phosphooxyethyl)-thiazole + 4-amino-2-methyl-5-(diphosphooxymethyl)pyrimidine + H(+) = thiamine phosphate + diphosphate. It participates in cofactor biosynthesis; thiamine diphosphate biosynthesis; thiamine phosphate from 4-amino-2-methyl-5-diphosphomethylpyrimidine and 4-methyl-5-(2-phosphoethyl)-thiazole: step 1/1. Functionally, condenses 4-methyl-5-(beta-hydroxyethyl)thiazole monophosphate (THZ-P) and 2-methyl-4-amino-5-hydroxymethyl pyrimidine pyrophosphate (HMP-PP) to form thiamine monophosphate (TMP). This chain is Thiamine-phosphate synthase, found in Pseudomonas syringae pv. tomato (strain ATCC BAA-871 / DC3000).